The primary structure comprises 557 residues: MMAAASSPEKLLQLQEVDSSRAGSRILSPILGSSSPGLSHETSQPICIRSPYTDLGHDFTTIPFYSPTIFSYGGPSISECSSVHQSLSASLFWPSHGRVGTPITLHCPQGRSQQGQSAQTPWDSVITTSKSVRRRSQESEESMVSSGGKADLHYCAVCHDYASGYHYGVWSCEGCKAFFKRSIQGHNDYICPATNQCTIDKNRRKSCQACRLRKCYEVGMTKCGIRKERGNYRNSQARRLTRLSSQGKTAEPKGITGPAEGSLNKPEKPALTPEQLIERILEAEPPEIYLVKDAKRPLTEASVMMLLTNLADKELVHMISWAKKIPGFVELSLVDQVHLLECCWLEVLMIGLMWRSVDHPGKLIFCPDLSLSREEGSCVQGFVEIFDMLIAATTRVRELKLQREEYVCLKAMILLNSNMCLSSSDCSEDLQSRSKLLRLLDAMTDALVLAIGKTGLTFRQQYTRLAHLLMLLSHIRHVSNKGMDHLHCMKMKNIVPLYDLLLEMLDAHIMHSSCLPHQPPQQDSKDQSEVPAPLHSSAGGPSNTWTPSSARAGGESQ.

Residues 1–154 (MMAAASSPEK…SSGGKADLHY (154 aa)) form a modulating region. 2 NR C4-type zinc fingers span residues 155 to 175 (CAVCHDYASGYHYGVWSCEGC) and 191 to 215 (CPATNQCTIDKNRRKSCQACRLRKC). The nuclear receptor DNA-binding region spans 155-220 (CAVCHDYASG…RLRKCYEVGM (66 aa)). A disordered region spans residues 240–268 (LTRLSSQGKTAEPKGITGPAEGSLNKPEK). The region spanning 272-508 (TPEQLIERIL…DLLLEMLDAH (237 aa)) is the NR LBD domain. The interval 513-557 (SCLPHQPPQQDSKDQSEVPAPLHSSAGGPSNTWTPSSARAGGESQ) is disordered. Residues 539–557 (GGPSNTWTPSSARAGGESQ) show a composition bias toward polar residues.

The protein belongs to the nuclear hormone receptor family. NR3 subfamily. Binds DNA as a homodimer. Can form a heterodimer with ER-alpha.

The protein resides in the nucleus. Functionally, binds estrogens with an affinity similar to that of ER-alpha, and activates expression of reporter genes containing estrogen response elements (ERE) in an estrogen-dependent manner. This Oreochromis niloticus (Nile tilapia) protein is Estrogen receptor beta (esr2).